The following is a 973-amino-acid chain: MDPFRPSFRGQSPIHPSQCQAVRMPGCWPQASKPLDPALGRGAPAGRGHVFGKPEEPSTQRGPAQRESVGLVSMFRGLGIETVSKTPLKREMLPSGRGILGRGLSANLVRKDREELSPTFWDPKVLAAGDSKMAETSVGWSRTLGRGSSDASLLPLGRAAGGISREVDKPPCTFSTPSRGPPQLSSPPALPQSPLHSPDRPLVLTVEHKEKELIVKQGSKGTPQSLGLNLVKIQCHNEAVYQYHVTFSPNVECKSMRFGMLKDHQAVTGNVTAFDGSILYLPVKLQQVLELKSQRKTDSAEISIKIQMTKILEPCSDLCIPFYNVVFRRVMKLLDMKLVGRNFYDPTSAMVLQQHRLQIWPGYAASIRRTDGGLFLLADVSHKVIRNDCVLDVMHAIYQQNKEHFQDECTKLLVGNIVITRYNNRTYRIDDVDWNKTPKDSFTMSDGKEITFLEYYSKNYGITVKEEDQPLLIHRPSERQDNHGMLLKGEILLLPELSFMTGIPEKMKKDFRAMKDLAQQINLSPKQHHSALECLLQRIAKNEAATNELMRWGLRLQKDVHKIEGRVLPMERINLKNTSFITSQELNWVKEVTRDPSILTIPMHFWALFYPKRAMDQARELVNMLEKIAGPIGMRMSPPAWVELKDDRIETYVRTIQSTLGAEGKIQMVVCIIMGPRDDLYGAIKKLCCVQSPVPSQVVNVRTIGQPTRLRSVAQKILLQINCKLGGELWGVDIPLKQLMVIGMDVYHDPSRGMRSVVGFVASINLTLTKWYSRVVFQMPHQEIVDSLKLCLVGSLKKFYEVNHCLPEKIVVYRDGVSDGQLKTVANYEIPQLQKCFEAFENYQPKMVVFVVQKKISTNLYLAAPQNFVTPTPGTVVDHTITSCEWVDFYLLAHHVRQGCGIPTHYVCVLNTANLSPDHMQRLTFKLCHMYWNWPGTIRVPAPCKYAHKLAFLSGHILHHEPAIQLCENLFFL.

The interval 28–65 (WPQASKPLDPALGRGAPAGRGHVFGKPEEPSTQRGPAQ) is disordered. Over residues 34–48 (PLDPALGRGAPAGRG) the composition is skewed to low complexity. Position 47 is a symmetric dimethylarginine (Arg47). An omega-N-methylarginine; by PRMT5; alternate mark is found at Arg76 and Arg97. A Symmetric dimethylarginine; by PRMT5; alternate modification is found at Arg76. The residue at position 97 (Arg97) is a Symmetric dimethylarginine; alternate. Arg102 carries the post-translational modification Symmetric dimethylarginine; by PRMT5; alternate. Residue Arg102 is modified to Omega-N-methylarginine; alternate. Arg146 and Arg158 each carry symmetric dimethylarginine. Residues 162–199 (GISREVDKPPCTFSTPSRGPPQLSSPPALPQSPLHSPD) are disordered. At Arg165 the chain carries Symmetric dimethylarginine; by PRMT5. The region spanning 389-502 (CVLDVMHAIY…LLPELSFMTG (114 aa)) is the PAZ domain. Residue Arg551 is modified to Symmetric dimethylarginine; by PRMT5. A Piwi domain is found at 668-959 (MVVCIIMGPR…LAFLSGHILH (292 aa)). Residues Asp745, Glu783, Asp815, and His948 contribute to the active site.

It belongs to the argonaute family. Piwi subfamily. Interacts with DDX4, MAEL, EIF3A, EIF4E, EIF4G, PRMT5 and WDR77. Associates with EIF4E- and EIF4G-containing m7G cap-binding complexes. Interacts (when methylated on arginine residues) with TDRD1 and TDRKH/TDRD2. Interacts with TDRD12. Component of the PET complex, at least composed of EXD1, PIWIL2, TDRD12 and piRNAs. Interacts with MOV10L1. Interacts with GPAT2. Interacts with TEX19. Interacts with GSK3B. Interacts (via PIWI domain) with BMAL1 and CLOCK. Interacts with TEX15. The cofactor is Mg(2+). Arginine methylation by PRMT5 is required for the interaction with Tudor domain-containing protein TDRD1 and subsequent localization to the meiotic nuage, also named P granule. Expressed in adult testis and in most tumors.

Its subcellular location is the cytoplasm. Endoribonuclease that plays a central role during spermatogenesis by repressing transposable elements and preventing their mobilization, which is essential for the germline integrity. Plays an essential role in meiotic differentiation of spermatocytes, germ cell differentiation and in self-renewal of spermatogonial stem cells. Acts via the piRNA metabolic process, which mediates the repression of transposable elements during meiosis by forming complexes composed of piRNAs and Piwi proteins and govern the methylation and subsequent repression of transposons. During piRNA biosynthesis, plays a key role in the piRNA amplification loop, also named ping-pong amplification cycle, by acting as a 'slicer-competent' piRNA endoribonuclease that cleaves primary piRNAs, which are then loaded onto 'slicer-incompetent' PIWIL4. PIWIL2 slicing produces a pre-miRNA intermediate, which is then processed in mature piRNAs, and as well as a 16 nucleotide by-product that is degraded. Required for PIWIL4/MIWI2 nuclear localization and association with secondary piRNAs antisense. Besides their function in transposable elements repression, piRNAs are probably involved in other processes during meiosis such as translation regulation. Indirectly modulates expression of genes such as PDGFRB, SLC2A1, ITGA6, GJA7, THY1, CD9 and STRA8. When overexpressed, acts as an oncogene by inhibition of apoptosis and promotion of proliferation in tumors. Represses circadian rhythms by promoting the stability and activity of core clock components BMAL1 and CLOCK by inhibiting GSK3B-mediated phosphorylation and ubiquitination-dependent degradation of these proteins. The polypeptide is Piwi-like protein 2 (PIWIL2) (Homo sapiens (Human)).